The chain runs to 366 residues: Histidinol-phosphate aminotransferase (366 aa).

Lys228 is modified (N6-(pyridoxal phosphate)lysine).

This sequence belongs to the class-II pyridoxal-phosphate-dependent aminotransferase family. Histidinol-phosphate aminotransferase subfamily. In terms of assembly, homodimer. It depends on pyridoxal 5'-phosphate as a cofactor.

It carries out the reaction L-histidinol phosphate + 2-oxoglutarate = 3-(imidazol-4-yl)-2-oxopropyl phosphate + L-glutamate. It functions in the pathway amino-acid biosynthesis; L-histidine biosynthesis; L-histidine from 5-phospho-alpha-D-ribose 1-diphosphate: step 7/9. This is Histidinol-phosphate aminotransferase from Stutzerimonas stutzeri (Pseudomonas stutzeri).